A 184-amino-acid chain; its full sequence is MGLEEKLPSGFLLTTVEGLAGYARKGSLWPATFGLACCAIEMMATTSGRFDLARFGMEAFRASPRQADLLIVAGRVSQKMGPVLRQVYDQMAEPKWVLAMGVCASSGGMFNNYAVVQGVDHIVPVDIYLPGCPPRPEMLLNAIIELHRKIQEMPLGVNREEARAAAERAALASTPTIDMKGLLR.

4 residues coordinate [4Fe-4S] cluster: C37, C38, C103, and C132.

Belongs to the complex I 20 kDa subunit family. NDH-1 is composed of 14 different subunits. Subunits NuoB, C, D, E, F, and G constitute the peripheral sector of the complex. [4Fe-4S] cluster serves as cofactor.

The protein resides in the cell membrane. It carries out the reaction a quinone + NADH + 5 H(+)(in) = a quinol + NAD(+) + 4 H(+)(out). NDH-1 shuttles electrons from NADH, via FMN and iron-sulfur (Fe-S) centers, to quinones in the respiratory chain. The immediate electron acceptor for the enzyme in this species is believed to be a menaquinone. Couples the redox reaction to proton translocation (for every two electrons transferred, four hydrogen ions are translocated across the cytoplasmic membrane), and thus conserves the redox energy in a proton gradient. This is NADH-quinone oxidoreductase subunit B from Rhodococcus erythropolis (strain PR4 / NBRC 100887).